The chain runs to 396 residues: S-adenosylmethionine synthase (396 aa).

Histidine 16 lines the ATP pocket. Residue aspartate 18 participates in Mg(2+) binding. A K(+)-binding site is contributed by glutamate 44. Positions 57 and 100 each coordinate L-methionine. The tract at residues 100–110 (QSPDIAQGVDR) is flexible loop. ATP contacts are provided by residues 167 to 169 (DAK), 233 to 234 (RF), aspartate 242, 248 to 249 (RK), alanine 265, and lysine 269. Aspartate 242 serves as a coordination point for L-methionine. L-methionine is bound at residue lysine 273.

This sequence belongs to the AdoMet synthase family. In terms of assembly, homotetramer; dimer of dimers. The cofactor is Mg(2+). Requires K(+) as cofactor.

It is found in the cytoplasm. It catalyses the reaction L-methionine + ATP + H2O = S-adenosyl-L-methionine + phosphate + diphosphate. Its pathway is amino-acid biosynthesis; S-adenosyl-L-methionine biosynthesis; S-adenosyl-L-methionine from L-methionine: step 1/1. Functionally, catalyzes the formation of S-adenosylmethionine (AdoMet) from methionine and ATP. The overall synthetic reaction is composed of two sequential steps, AdoMet formation and the subsequent tripolyphosphate hydrolysis which occurs prior to release of AdoMet from the enzyme. This chain is S-adenosylmethionine synthase, found in Paraburkholderia xenovorans (strain LB400).